The chain runs to 388 residues: MYLQTLHLRNFRNYQHQHVDFSAQKTILIGNNAQGKSNLLEAVELLASLKTHRTSRDADLVKQGEATARIQAQIQRGYGTVDFDLLLRNQGGRTLKLNGEILRRQLDGLGTLNAVEFSCLDLDLVRGGPDCRRQWIDNLLIQLEPVYARILQEYQQVLKQRNALLRTAKKLHRNQAAIPTDLTQQLTLWDLQLAATGSRVTRRRSRGLLRLMPLAQAWHRDISSQTETLEITYCPNIPWQQDDPHHVQQACLDKIEQRRQAEQHQGSSMVGPHRDEIEFSINGTPARFYGSQGQQRTLVLALKLAELQLIETIIGEPPLLLLDDVLAELDPSRQNQLLDTIQTRFQTLITTTHLNSFGADWLKHSQILTVNQGTLQPYARPLSETYGP.

ATP is bound at residue 30-37; it reads GNNAQGKS.

Belongs to the RecF family.

The protein localises to the cytoplasm. Its function is as follows. The RecF protein is involved in DNA metabolism; it is required for DNA replication and normal SOS inducibility. RecF binds preferentially to single-stranded, linear DNA. It also seems to bind ATP. The sequence is that of DNA replication and repair protein RecF from Picosynechococcus sp. (strain ATCC 27264 / PCC 7002 / PR-6) (Agmenellum quadruplicatum).